The sequence spans 477 residues: Tripartite motif-containing protein 72 (477 aa).

Zn(2+)-binding residues include cysteine 14, cysteine 17, cysteine 29, histidine 31, cysteine 34, cysteine 37, cysteine 53, cysteine 56, cysteine 86, histidine 89, cysteine 97, aspartate 100, cysteine 105, cysteine 108, histidine 114, and histidine 117. Residues 14–57 (CPLCLQLFDAPVTAECGHSFCRACLGRVAGEPAADGTVLCPCCQ) form an RING-type zinc finger. Residues 81–122 (VPQGHCEEHLDPLSIYCEQDRALVCGVCASLGSHRGHRLLPA) form a B box-type zinc finger. Positions 135 to 232 (QQKLQLQEAC…EKVLEEVADK (98 aa)) form a coiled coil. Residue cysteine 144 is modified to S-nitrosocysteine. At serine 255 the chain carries Phosphoserine. The B30.2/SPRY domain occupies 271-475 (DFKFQVWRKM…PLLLVGPEGA (205 aa)).

The protein belongs to the TRIM/RBCC family. In terms of assembly, homodimer. Homooligomer; disulfide-linked. Oligomerizes on the phospholipid membrane. Interacts with DYSF and CAV3. In terms of processing, disulfide bond formation at Cys-242 occurs in case of membrane damage that cause the entry of the oxidized milieu of the extracellular space, resulting in homooligomerization. S-nitrosylation at Cys-144 stabilizes TRIM72 and protects against oxidation-induced protein degradation and cell death.

The protein resides in the cell membrane. Its subcellular location is the sarcolemma. The protein localises to the cytoplasmic vesicle membrane. The catalysed reaction is S-ubiquitinyl-[E2 ubiquitin-conjugating enzyme]-L-cysteine + [acceptor protein]-L-lysine = [E2 ubiquitin-conjugating enzyme]-L-cysteine + N(6)-ubiquitinyl-[acceptor protein]-L-lysine.. It functions in the pathway protein modification; protein ubiquitination. With respect to regulation, specifically binds phosphatidylserine. The binding to phospholipids enhances ubiquitination activity. Functionally, muscle-specific E3 ubiquitin-protein ligase that plays a central role in cell membrane repair by nucleating the assembly of the repair machinery at injury sites. Its ubiquitination activity is mediated by E2 ubiquitin-conjugating enzymes UBE2D1, UBE2D2 and UBE2D3. Acts as a sensor of oxidation: upon membrane damage, entry of extracellular oxidative environment results in disulfide bond formation and homooligomerization at the injury site. This oligomerization acts as a nucleation site for recruitment of TRIM72-containing vesicles to the injury site, leading to membrane patch formation. Probably acts upstream of the Ca(2+)-dependent membrane resealing process. Required for transport of DYSF to sites of cell injury during repair patch formation. Regulates membrane budding and exocytosis. May be involved in the regulation of the mobility of KCNB1-containing endocytic vesicles. The chain is Tripartite motif-containing protein 72 from Homo sapiens (Human).